The following is a 306-amino-acid chain: L-lactate dehydrogenase (306 aa).

Residues valine 11, aspartate 32, lysine 37, and 76-77 (GA) each bind NAD(+). Residues glutamine 79 and arginine 85 each coordinate substrate. NAD(+)-binding positions include serine 98, 115–117 (VSN), and serine 140. 117–120 (NPVD) lines the substrate pocket. 145-148 (DTAR) serves as a coordination point for substrate. Residues arginine 150 and histidine 165 each contribute to the beta-D-fructose 1,6-bisphosphate site. Histidine 172 functions as the Proton acceptor in the catalytic mechanism. Residue tyrosine 214 is modified to Phosphotyrosine. Threonine 223 is a substrate binding site.

It belongs to the LDH/MDH superfamily. LDH family. Homotetramer.

The protein localises to the cytoplasm. It catalyses the reaction (S)-lactate + NAD(+) = pyruvate + NADH + H(+). It participates in fermentation; pyruvate fermentation to lactate; (S)-lactate from pyruvate: step 1/1. Allosterically activated by fructose 1,6-bisphosphate (FBP). Its function is as follows. Catalyzes the conversion of lactate to pyruvate. The protein is L-lactate dehydrogenase of Synechococcus sp. (strain JA-3-3Ab) (Cyanobacteria bacterium Yellowstone A-Prime).